The following is a 216-amino-acid chain: Transmembrane emp24 domain-containing protein eca (216 aa).

The N-terminal stretch at 1 to 20 (MRDQFISLALILCVLHSACG) is a signal peptide. The Lumenal portion of the chain corresponds to 21 to 182 (LYFHISETER…FRHTSESTNS (162 aa)). Positions 30–126 (RKCFIEEVPD…QLRVHLDIQV (97 aa)) constitute a GOLD domain. Residues 134–164 (ANVAQKEKLTELQLRIRQLLDQVEQITKEQN) are a coiled coil. A helical membrane pass occupies residues 183 to 203 (RVLWWSLAQTIVLVCMGFWQM). Topologically, residues 204–216 (RHLKSFFEAKKLV) are cytoplasmic. Residues 213–216 (KKLV) carry the Prevents secretion from ER motif.

This sequence belongs to the EMP24/GP25L family.

The protein resides in the endoplasmic reticulum membrane. Functionally, eca and bai are essential, though not redundant, for dorsoventral patterning of the embryo. Specifically required during early embryogenesis for the activity of maternal tkv, while the zygotic tkv is not affected. Involved in Golgi organization. This Drosophila sechellia (Fruit fly) protein is Transmembrane emp24 domain-containing protein eca.